Here is a 294-residue protein sequence, read N- to C-terminus: Ribosomal protein L11 methyltransferase (294 aa).

The S-adenosyl-L-methionine site is built by T144, G165, D187, and N229.

It belongs to the methyltransferase superfamily. PrmA family.

It localises to the cytoplasm. It carries out the reaction L-lysyl-[protein] + 3 S-adenosyl-L-methionine = N(6),N(6),N(6)-trimethyl-L-lysyl-[protein] + 3 S-adenosyl-L-homocysteine + 3 H(+). Functionally, methylates ribosomal protein L11. The chain is Ribosomal protein L11 methyltransferase from Pseudomonas aeruginosa (strain LESB58).